The chain runs to 896 residues: Protein translocase subunit SecA (896 aa).

Residues Gln-87, 105–109 (GEGKT), and Asp-507 contribute to the ATP site. Positions 855 to 879 (LSENDEASETQTFRRQEKKIGRNDP) are disordered. Basic and acidic residues predominate over residues 866–876 (TFRRQEKKIGR). Residues Cys-880, Cys-882, Cys-891, and His-892 each coordinate Zn(2+).

It belongs to the SecA family. Monomer and homodimer. Part of the essential Sec protein translocation apparatus which comprises SecA, SecYEG and auxiliary proteins SecDF-YajC and YidC. The cofactor is Zn(2+).

The protein resides in the cell inner membrane. The protein localises to the cytoplasm. The catalysed reaction is ATP + H2O + cellular proteinSide 1 = ADP + phosphate + cellular proteinSide 2.. Its function is as follows. Part of the Sec protein translocase complex. Interacts with the SecYEG preprotein conducting channel. Has a central role in coupling the hydrolysis of ATP to the transfer of proteins into and across the cell membrane, serving both as a receptor for the preprotein-SecB complex and as an ATP-driven molecular motor driving the stepwise translocation of polypeptide chains across the membrane. This Legionella pneumophila (strain Lens) protein is Protein translocase subunit SecA.